The chain runs to 199 residues: Dephospho-CoA kinase (199 aa).

A DPCK domain is found at 3–199; that stretch reads VLGLTGSIGM…AAAKMPRRRD (197 aa). An ATP-binding site is contributed by 11-16; the sequence is GMGKST.

Belongs to the CoaE family.

The protein resides in the cytoplasm. The catalysed reaction is 3'-dephospho-CoA + ATP = ADP + CoA + H(+). Its pathway is cofactor biosynthesis; coenzyme A biosynthesis; CoA from (R)-pantothenate: step 5/5. Functionally, catalyzes the phosphorylation of the 3'-hydroxyl group of dephosphocoenzyme A to form coenzyme A. The sequence is that of Dephospho-CoA kinase from Rhodopseudomonas palustris (strain ATCC BAA-98 / CGA009).